Here is a 723-residue protein sequence, read N- to C-terminus: Catalase-peroxidase (723 aa).

The segment at residues 96-224 (WHAAGTYRIQ…LAAVQMGLIY (129 aa)) is a cross-link (tryptophyl-tyrosyl-methioninium (Trp-Tyr) (with M-250)). Residue His97 is the Proton acceptor of the active site. Residues 224–250 (YVNPEGVNSQPDPIKTGEQVRVTFARM) constitute a cross-link (tryptophyl-tyrosyl-methioninium (Tyr-Met) (with W-96)). Residue His265 coordinates heme b.

It belongs to the peroxidase family. Peroxidase/catalase subfamily. In terms of assembly, homodimer or homotetramer. It depends on heme b as a cofactor. Post-translationally, formation of the three residue Trp-Tyr-Met cross-link is important for the catalase, but not the peroxidase activity of the enzyme.

It carries out the reaction H2O2 + AH2 = A + 2 H2O. The catalysed reaction is 2 H2O2 = O2 + 2 H2O. In terms of biological role, bifunctional enzyme with both catalase and broad-spectrum peroxidase activity. This is Catalase-peroxidase from Marinobacter nauticus (strain ATCC 700491 / DSM 11845 / VT8) (Marinobacter aquaeolei).